The primary structure comprises 132 residues: Large ribosomal subunit protein uL14 (132 aa).

The protein belongs to the universal ribosomal protein uL14 family. As to quaternary structure, part of the 50S ribosomal subunit. Forms a cluster with proteins L3 and L24e, part of which may contact the 16S rRNA in 2 intersubunit bridges.

Its function is as follows. Binds to 23S rRNA. Forms part of two intersubunit bridges in the 70S ribosome. This is Large ribosomal subunit protein uL14 from Halobacterium salinarum (strain ATCC 29341 / DSM 671 / R1).